Reading from the N-terminus, the 972-residue chain is MTELPTTVPGYNSAVAQTDSDAMRYRYTAELAGRIESTWQDNWARLQTFNVPNPVGSLAPPDGSVVPADKLFVQDMFPYPSGDGLHVGHPLGYIATDVYARYFRMTGHNVLHAMGFDAFGLPAEQYAMQTGTHPRILTEANVVNFRHQLGRLGLGHDSRRTFSTTDVEFYKWTQWIFLQIYNAWFDVAANKARPIAELIAEFDSGERRLVDGRDWATLSAGERADVIDNCRLVYRADSMVNWCPGLGTVLANEEVTADGRSDRGNFPVFRKRLRQWMMRITAYADRLLDDLDLLDWPEQVKTMQRNWIGRSSGATVLFSAILSRSDAATTEVDVEVFTTRPDTMFGVTYLVLAPEHNLVDELVATVWPDRTDPRWTYGAATPGAAVAAYRRAIVAKSDLDRQESKEKTGVFLGRYATNPATGKPVPIFVADYVLVGYGTGAVMAVPGHDPRDWDFAHKFHLPIVEVIAGSDISEAAYVGDGVLVNSGYLDGMDVATAQEAITARLESEGRGHARIEFKLRDWLFARQRYWGEPFPIIYDSDGRPHALDEAALPVELPDVPYYSPVLFDPDDADSEPSPPLAKATEWVHVELDLGDGLKPYSRDTNVMPQWAGSSWYELRYTDPHNSERLCAKENEAYWMGPRPTEHGIDDPGGVDLYVGGAEHAVLHLLYARFWHKVLYDLGHVSSREPYRRLINQGYIQAFAYTDAHGSYVPANQVFQRGDGFFCPGPDGEIEVFQEFGKIGKSLKNSVSPDEICDEYGADTLRVYEMSMGPLEASRPWATKDVVGAYRFLQRVWRLVVDERTGETRVVDTAGELDTYTLRTLHRTIAGVSQDYAALRNNTATAKLIEYTNHLTKEHRGSVPRVAVEPLVLMLAPLAPHLAEELWLRLGHTTSLANGPFPQADPAYLVDDTVEYPVQVNGKIRGRIVVAADADYDTLKTVALADDKVQQFLAGATPRKVIVVAGRLISLVI.

The short motif at 78 to 89 (PYPSGDGLHVGH) is the 'HIGH' region element. The 'KMSKS' region signature appears at 741 to 745 (KIGKS). Residue Lys744 coordinates ATP.

The protein belongs to the class-I aminoacyl-tRNA synthetase family.

It localises to the cytoplasm. It carries out the reaction tRNA(Leu) + L-leucine + ATP = L-leucyl-tRNA(Leu) + AMP + diphosphate. The polypeptide is Leucine--tRNA ligase (Mycobacterium leprae (strain Br4923)).